The sequence spans 53 residues: ATP synthase protein 8 (53 aa).

The chain crosses the membrane as a helical span at residues 4–24 (MAPISWLLLFIIFSITFILFC).

It belongs to the ATPase protein 8 family. As to quaternary structure, F-type ATPases have 2 components, CF(1) - the catalytic core - and CF(0) - the membrane proton channel.

The protein resides in the mitochondrion membrane. Functionally, mitochondrial membrane ATP synthase (F(1)F(0) ATP synthase or Complex V) produces ATP from ADP in the presence of a proton gradient across the membrane which is generated by electron transport complexes of the respiratory chain. F-type ATPases consist of two structural domains, F(1) - containing the extramembraneous catalytic core and F(0) - containing the membrane proton channel, linked together by a central stalk and a peripheral stalk. During catalysis, ATP synthesis in the catalytic domain of F(1) is coupled via a rotary mechanism of the central stalk subunits to proton translocation. Part of the complex F(0) domain. Minor subunit located with subunit a in the membrane. This chain is ATP synthase protein 8 (mt:ATPase8), found in Drosophila sechellia (Fruit fly).